Consider the following 253-residue polypeptide: 5'/3'-nucleotidase SurE (253 aa).

Positions 8, 9, 39, and 92 each coordinate a divalent metal cation.

This sequence belongs to the SurE nucleotidase family. A divalent metal cation serves as cofactor.

Its subcellular location is the cytoplasm. It carries out the reaction a ribonucleoside 5'-phosphate + H2O = a ribonucleoside + phosphate. The enzyme catalyses a ribonucleoside 3'-phosphate + H2O = a ribonucleoside + phosphate. It catalyses the reaction [phosphate](n) + H2O = [phosphate](n-1) + phosphate + H(+). Its function is as follows. Nucleotidase with a broad substrate specificity as it can dephosphorylate various ribo- and deoxyribonucleoside 5'-monophosphates and ribonucleoside 3'-monophosphates with highest affinity to 3'-AMP. Also hydrolyzes polyphosphate (exopolyphosphatase activity) with the preference for short-chain-length substrates (P20-25). Might be involved in the regulation of dNTP and NTP pools, and in the turnover of 3'-mononucleotides produced by numerous intracellular RNases (T1, T2, and F) during the degradation of various RNAs. The sequence is that of 5'/3'-nucleotidase SurE from Enterobacter sp. (strain 638).